A 368-amino-acid polypeptide reads, in one-letter code: Phospho-N-acetylmuramoyl-pentapeptide-transferase (368 aa).

Helical transmembrane passes span 2-22 (IALI…TPLL), 51-71 (TLGG…SALY), 80-100 (PTWA…LGFI), 116-136 (VGGK…LALI), 166-186 (IVAI…WTNA), 193-213 (LDGL…IIAM), 234-254 (PLDL…FLWY), 256-276 (CNPA…GLFA), 277-297 (ALSI…LFVV), and 340-360 (FWIV…GNWV).

The protein belongs to the glycosyltransferase 4 family. MraY subfamily. It depends on Mg(2+) as a cofactor.

Its subcellular location is the cell membrane. The enzyme catalyses UDP-N-acetyl-alpha-D-muramoyl-L-alanyl-gamma-D-glutamyl-meso-2,6-diaminopimeloyl-D-alanyl-D-alanine + di-trans,octa-cis-undecaprenyl phosphate = di-trans,octa-cis-undecaprenyl diphospho-N-acetyl-alpha-D-muramoyl-L-alanyl-D-glutamyl-meso-2,6-diaminopimeloyl-D-alanyl-D-alanine + UMP. It participates in cell wall biogenesis; peptidoglycan biosynthesis. Catalyzes the initial step of the lipid cycle reactions in the biosynthesis of the cell wall peptidoglycan: transfers peptidoglycan precursor phospho-MurNAc-pentapeptide from UDP-MurNAc-pentapeptide onto the lipid carrier undecaprenyl phosphate, yielding undecaprenyl-pyrophosphoryl-MurNAc-pentapeptide, known as lipid I. This is Phospho-N-acetylmuramoyl-pentapeptide-transferase from Bifidobacterium animalis subsp. lactis (strain AD011).